A 330-amino-acid chain; its full sequence is Biotin synthase (330 aa).

Residues N55–R282 form the Radical SAM core domain. Positions 70, 74, and 77 each coordinate [4Fe-4S] cluster. C114, C145, C205, and R277 together coordinate [2Fe-2S] cluster.

The protein belongs to the radical SAM superfamily. Biotin synthase family. Homodimer. The cofactor is [4Fe-4S] cluster. [2Fe-2S] cluster serves as cofactor.

It carries out the reaction (4R,5S)-dethiobiotin + (sulfur carrier)-SH + 2 reduced [2Fe-2S]-[ferredoxin] + 2 S-adenosyl-L-methionine = (sulfur carrier)-H + biotin + 2 5'-deoxyadenosine + 2 L-methionine + 2 oxidized [2Fe-2S]-[ferredoxin]. The protein operates within cofactor biosynthesis; biotin biosynthesis; biotin from 7,8-diaminononanoate: step 2/2. Catalyzes the conversion of dethiobiotin (DTB) to biotin by the insertion of a sulfur atom into dethiobiotin via a radical-based mechanism. The polypeptide is Biotin synthase (Methylibium petroleiphilum (strain ATCC BAA-1232 / LMG 22953 / PM1)).